Consider the following 455-residue polypeptide: EP1-like glycoprotein 1 (455 aa).

The signal sequence occupies residues 1–22; that stretch reads MLRFDYLLITALAISTVSVVMA. The Bulb-type lectin domain occupies 43 to 163; sequence TEYDASYRFL…HGKFVWQSFD (121 aa). Residues Asn-106, Asn-191, Asn-211, Asn-241, and Asn-289 are each glycosylated (N-linked (GlcNAc...) asparagine). An S-nitrosocysteine modification is found at Cys-374. The PAN domain occupies 374–455; it reads CSGGKGKAVN…NTSSVAYIKY (82 aa). Cystine bridges form between Cys-410–Cys-432 and Cys-414–Cys-420. A glycan (N-linked (GlcNAc...) asparagine) is linked at Asn-446.

It localises to the secreted. The protein localises to the cell wall. The polypeptide is EP1-like glycoprotein 1 (Arabidopsis thaliana (Mouse-ear cress)).